The sequence spans 444 residues: Bifunctional protein GlmU (444 aa).

The segment at 1 to 226 (MTDSTHRTTA…EAELAGVNSR (226 aa)) is pyrophosphorylase. Residues 13 to 16 (LAAG), lysine 27, glutamine 75, and 80 to 81 (GT) each bind UDP-N-acetyl-alpha-D-glucosamine. Aspartate 103 is a Mg(2+) binding site. UDP-N-acetyl-alpha-D-glucosamine is bound by residues glycine 139, glutamate 153, asparagine 168, and asparagine 224. Asparagine 224 serves as a coordination point for Mg(2+). Positions 227–247 (SELARAEATLQTRLRNAAMDA) are linker. The tract at residues 248-444 (GVTLVAPETV…QSLKARKEQG (197 aa)) is N-acetyltransferase. Residues arginine 313 and lysine 331 each coordinate UDP-N-acetyl-alpha-D-glucosamine. Histidine 343 functions as the Proton acceptor in the catalytic mechanism. UDP-N-acetyl-alpha-D-glucosamine-binding residues include tyrosine 346 and asparagine 357. Acetyl-CoA contacts are provided by residues alanine 360, 366–367 (NY), serine 385, alanine 403, and arginine 420.

This sequence in the N-terminal section; belongs to the N-acetylglucosamine-1-phosphate uridyltransferase family. In the C-terminal section; belongs to the transferase hexapeptide repeat family. As to quaternary structure, homotrimer. Mg(2+) serves as cofactor.

The protein localises to the cytoplasm. It carries out the reaction alpha-D-glucosamine 1-phosphate + acetyl-CoA = N-acetyl-alpha-D-glucosamine 1-phosphate + CoA + H(+). It catalyses the reaction N-acetyl-alpha-D-glucosamine 1-phosphate + UTP + H(+) = UDP-N-acetyl-alpha-D-glucosamine + diphosphate. It participates in nucleotide-sugar biosynthesis; UDP-N-acetyl-alpha-D-glucosamine biosynthesis; N-acetyl-alpha-D-glucosamine 1-phosphate from alpha-D-glucosamine 6-phosphate (route II): step 2/2. It functions in the pathway nucleotide-sugar biosynthesis; UDP-N-acetyl-alpha-D-glucosamine biosynthesis; UDP-N-acetyl-alpha-D-glucosamine from N-acetyl-alpha-D-glucosamine 1-phosphate: step 1/1. The protein operates within bacterial outer membrane biogenesis; LPS lipid A biosynthesis. Its function is as follows. Catalyzes the last two sequential reactions in the de novo biosynthetic pathway for UDP-N-acetylglucosamine (UDP-GlcNAc). The C-terminal domain catalyzes the transfer of acetyl group from acetyl coenzyme A to glucosamine-1-phosphate (GlcN-1-P) to produce N-acetylglucosamine-1-phosphate (GlcNAc-1-P), which is converted into UDP-GlcNAc by the transfer of uridine 5-monophosphate (from uridine 5-triphosphate), a reaction catalyzed by the N-terminal domain. The chain is Bifunctional protein GlmU from Gluconobacter oxydans (strain 621H) (Gluconobacter suboxydans).